We begin with the raw amino-acid sequence, 162 residues long: Crossover junction endodeoxyribonuclease RuvC (162 aa).

Residues Asp-8, Glu-69, and His-141 contribute to the active site. Mg(2+) contacts are provided by Asp-8, Glu-69, and His-141.

The protein belongs to the RuvC family. Homodimer which binds Holliday junction (HJ) DNA. The HJ becomes 2-fold symmetrical on binding to RuvC with unstacked arms; it has a different conformation from HJ DNA in complex with RuvA. In the full resolvosome a probable DNA-RuvA(4)-RuvB(12)-RuvC(2) complex forms which resolves the HJ. It depends on Mg(2+) as a cofactor.

Its subcellular location is the cytoplasm. The catalysed reaction is Endonucleolytic cleavage at a junction such as a reciprocal single-stranded crossover between two homologous DNA duplexes (Holliday junction).. Functionally, the RuvA-RuvB-RuvC complex processes Holliday junction (HJ) DNA during genetic recombination and DNA repair. Endonuclease that resolves HJ intermediates. Cleaves cruciform DNA by making single-stranded nicks across the HJ at symmetrical positions within the homologous arms, yielding a 5'-phosphate and a 3'-hydroxyl group; requires a central core of homology in the junction. The consensus cleavage sequence is 5'-(A/T)TT(C/G)-3'. Cleavage occurs on the 3'-side of the TT dinucleotide at the point of strand exchange. HJ branch migration catalyzed by RuvA-RuvB allows RuvC to scan DNA until it finds its consensus sequence, where it cleaves and resolves the cruciform DNA. This is Crossover junction endodeoxyribonuclease RuvC from Wolbachia sp. subsp. Brugia malayi (strain TRS).